A 726-amino-acid polypeptide reads, in one-letter code: Dipeptidyl-peptidase 5 (726 aa).

Residues 1–19 form the signal peptide; sequence MAPAKWLIASLAFASTGLA. Asn-96 and Asn-252 each carry an N-linked (GlcNAc...) asparagine glycan. The interval 268 to 292 is disordered; sequence VAEPINKRNGPRTPHGIEGASSSPV. A glycan (N-linked (GlcNAc...) asparagine) is linked at Asn-485. The active-site Charge relay system is Ser-558. The N-linked (GlcNAc...) asparagine glycan is linked to Asn-605. Residues Asp-641 and His-673 each act as charge relay system in the active site. Residue Asn-699 is glycosylated (N-linked (GlcNAc...) asparagine).

The protein belongs to the peptidase S9C family.

The protein localises to the secreted. In terms of biological role, extracellular dipeptidyl-peptidase which removes N-terminal dipeptides sequentially from polypeptides having unsubstituted N-termini. Contributes to pathogenicity. This chain is Dipeptidyl-peptidase 5 (DPP5), found in Arthroderma otae (strain ATCC MYA-4605 / CBS 113480) (Microsporum canis).